The sequence spans 192 residues: MACGATLKRPMEFEAALLSPGSPKRRRCAPLPGPTPGLRPPDAEPPPPFQTQTPPQSLQQPAPPGSERRLPTPEQIFQNIKQEYSRYQRWRHLEVVLNQSEACASESQPHSSALTAPSSPGSSWMKKDQPTFTLRQVGIICERLLKDYEDKIREEYEQILNTKLAEQYESFVKFTHDQIMRRYGTRPTSYVS.

Residues 17-71 (LLSPGSPKRRRCAPLPGPTPGLRPPDAEPPPPFQTQTPPQSLQQPAPPGSERRLP) are disordered. Phosphoserine is present on serine 22. The Nuclear localization signal motif lies at 23-28 (PKRRRC). Residues 31-49 (LPGPTPGLRPPDAEPPPPF) are compositionally biased toward pro residues. Low complexity predominate over residues 50–60 (QTQTPPQSLQQ). Threonine 72 is subject to Phosphothreonine. Over residues 104-122 (ASESQPHSSALTAPSSPGS) the composition is skewed to polar residues. A disordered region spans residues 104–127 (ASESQPHSSALTAPSSPGSSWMKK). Residues 189–192 (SYVS) carry the SYVS motif motif.

Belongs to the akirin family. Widely expressed with the highest expression in heart, liver, placenta and peripheral blood leukocytes.

The protein resides in the nucleus. Molecular adapter that acts as a bridge between proteins, and which is involved skeletal muscle development. Functions as a signal transducer for MSTN during skeletal muscle regeneration and myogenesis. May regulate chemotaxis of both macrophages and myoblasts by reorganising actin cytoskeleton, leading to more efficient lamellipodia formation via a PI3 kinase dependent pathway. In contrast to AKIRIN2, not involved in nuclear import of proteasomes. The chain is Akirin-1 from Homo sapiens (Human).